We begin with the raw amino-acid sequence, 453 residues long: Kynureninase (453 aa).

Residues Leu-111, Thr-112, 139–142 (FPSD), Ser-196, Asp-226, His-229, and Tyr-251 each bind pyridoxal 5'-phosphate. Position 252 is an N6-(pyridoxal phosphate)lysine (Lys-252). Residues Trp-286 and Asn-314 each contribute to the pyridoxal 5'-phosphate site.

It belongs to the kynureninase family. In terms of assembly, homodimer. Requires pyridoxal 5'-phosphate as cofactor.

Its subcellular location is the cytoplasm. It localises to the nucleus. It carries out the reaction L-kynurenine + H2O = anthranilate + L-alanine + H(+). It catalyses the reaction 3-hydroxy-L-kynurenine + H2O = 3-hydroxyanthranilate + L-alanine + H(+). Its pathway is amino-acid degradation; L-kynurenine degradation; L-alanine and anthranilate from L-kynurenine: step 1/1. It functions in the pathway cofactor biosynthesis; NAD(+) biosynthesis; quinolinate from L-kynurenine: step 2/3. Functionally, catalyzes the cleavage of L-kynurenine (L-Kyn) and L-3-hydroxykynurenine (L-3OHKyn) into anthranilic acid (AA) and 3-hydroxyanthranilic acid (3-OHAA), respectively. This is Kynureninase from Saccharomyces cerevisiae (strain ATCC 204508 / S288c) (Baker's yeast).